We begin with the raw amino-acid sequence, 273 residues long: Bis(5'-nucleosyl)-tetraphosphatase, symmetrical (273 aa).

This sequence belongs to the Ap4A hydrolase family.

It catalyses the reaction P(1),P(4)-bis(5'-adenosyl) tetraphosphate + H2O = 2 ADP + 2 H(+). Its function is as follows. Hydrolyzes diadenosine 5',5'''-P1,P4-tetraphosphate to yield ADP. This chain is Bis(5'-nucleosyl)-tetraphosphatase, symmetrical, found in Proteus mirabilis (strain HI4320).